Here is a 151-residue protein sequence, read N- to C-terminus: Arginine repressor (151 aa).

It belongs to the ArgR family.

It localises to the cytoplasm. It functions in the pathway amino-acid biosynthesis; L-arginine biosynthesis [regulation]. Regulates arginine biosynthesis genes. The protein is Arginine repressor of Lachnospira eligens (strain ATCC 27750 / DSM 3376 / VPI C15-48 / C15-B4) (Eubacterium eligens).